Here is a 271-residue protein sequence, read N- to C-terminus: Formamidopyrimidine-DNA glycosylase (271 aa).

Pro-2 (schiff-base intermediate with DNA) is an active-site residue. The active-site Proton donor is the Glu-3. Lys-57 acts as the Proton donor; for beta-elimination activity in catalysis. Positions 90, 109, and 151 each coordinate DNA. The FPG-type zinc-finger motif lies at 236–270 (HVYGRGGESCTQCGNLLSEIKLGQRATVFCGLCQT). The active-site Proton donor; for delta-elimination activity is Arg-260.

The protein belongs to the FPG family. Monomer. Requires Zn(2+) as cofactor.

It carries out the reaction Hydrolysis of DNA containing ring-opened 7-methylguanine residues, releasing 2,6-diamino-4-hydroxy-5-(N-methyl)formamidopyrimidine.. It catalyses the reaction 2'-deoxyribonucleotide-(2'-deoxyribose 5'-phosphate)-2'-deoxyribonucleotide-DNA = a 3'-end 2'-deoxyribonucleotide-(2,3-dehydro-2,3-deoxyribose 5'-phosphate)-DNA + a 5'-end 5'-phospho-2'-deoxyribonucleoside-DNA + H(+). Its function is as follows. Involved in base excision repair of DNA damaged by oxidation or by mutagenic agents. Acts as a DNA glycosylase that recognizes and removes damaged bases. Has a preference for oxidized purines, such as 7,8-dihydro-8-oxoguanine (8-oxoG). Has AP (apurinic/apyrimidinic) lyase activity and introduces nicks in the DNA strand. Cleaves the DNA backbone by beta-delta elimination to generate a single-strand break at the site of the removed base with both 3'- and 5'-phosphates. The polypeptide is Formamidopyrimidine-DNA glycosylase (Shewanella woodyi (strain ATCC 51908 / MS32)).